Reading from the N-terminus, the 51-residue chain is uncharacterized protein (51 aa).

The segment at 1-51 (MARTNVKLCPPKRSKRPSNSRSKSTSHSNRRSLNSLRRTRTSRRSNNGKFT) is disordered. Over residues 19-36 (NSRSKSTSHSNRRSLNSL) the composition is skewed to low complexity.

This is an uncharacterized protein from Bdellovibrio bacteriovorus (Bacteriophage phiMH2K).